Reading from the N-terminus, the 434-residue chain is [Pyruvate dehydrogenase (acetyl-transferring)] kinase isozyme 1, mitochondrial (434 aa).

The N-terminal 26 residues, 1-26 (MRLARLLRGGTSVRPLCAVPCASRSL), are a transit peptide targeting the mitochondrion. A Phosphotyrosine; by FGFR1 modification is found at Y136. The 231-residue stretch at 161–391 (TEYKESFGVD…DAVIYIKALS (231 aa)) folds into the Histidine kinase domain. Y241 bears the Phosphotyrosine; by FGFR1, ABL1, FLT3 and JAK2 mark. Y242 is subject to Phosphotyrosine; by FGFR1. ATP is bound by residues 277-284 (ELFKNAMR), D316, 335-336 (ST), and 352-357 (GFGYGL). T336 is modified (phosphothreonine). K403 bears the N6-succinyllysine mark.

The protein belongs to the PDK/BCKDK protein kinase family. Homodimer, and heterodimer with PDK2. Interacts with the pyruvate dehydrogenase complex subunit DLAT, and is part of the multimeric pyruvate dehydrogenase complex that contains multiple copies of pyruvate dehydrogenase (E1), dihydrolipoamide acetyltransferase (DLAT, E2) and lipoamide dehydrogenase (DLD, E3). Interacts with phosphoglycerate kinase PGK1; the interaction is direct, occurs under hypoxic conditions and leads to PDK1-mediated inhibition of pyruvate dehydrogenase complex activity. Post-translationally, phosphorylated by constitutively activated ABL1, FGFR1, FLT3 and JAK2 (in vitro), and this may also occur in cancer cells that express constitutively activated ABL1, FGFR1, FLT3 and JAK2. Phosphorylation at Tyr-241 and Tyr-242 strongly increases kinase activity, while phosphorylation at Tyr-136 has a lesser effect. Phosphorylated under hypoxic conditions at Thr-336 by phosphoglycerate kinase PGK1 which has an activating effect.

Its subcellular location is the mitochondrion matrix. The enzyme catalyses L-seryl-[pyruvate dehydrogenase E1 alpha subunit] + ATP = O-phospho-L-seryl-[pyruvate dehydrogenase E1 alpha subunit] + ADP + H(+). Kinase that plays a key role in regulation of glucose and fatty acid metabolism and homeostasis via phosphorylation of the pyruvate dehydrogenase subunits PDHA1 and PDHA2. This inhibits pyruvate dehydrogenase activity, and thereby regulates metabolite flux through the tricarboxylic acid cycle, down-regulates aerobic respiration and inhibits the formation of acetyl-coenzyme A from pyruvate. Plays an important role in cellular responses to hypoxia and is important for cell proliferation under hypoxia. This chain is [Pyruvate dehydrogenase (acetyl-transferring)] kinase isozyme 1, mitochondrial (Pdk1), found in Mus musculus (Mouse).